Consider the following 415-residue polypeptide: Dibenzothiophene monooxygenase (415 aa).

Residues Y94, 127-132 (NASSEN), 157-161 (KHFSS), R280, 365-366 (IG), and T387 each bind FMN. The interval 129-140 (SSENNSHILDWK) is lid loop.

This sequence belongs to the DszC flavin monooxygenase family. In terms of assembly, homotetramer.

It localises to the cytoplasm. The catalysed reaction is dibenzothiophene + 2 FMNH2 + 2 O2 = dibenzothiophene 5,5-dioxide + 2 FMN + 2 H2O + 2 H(+). It catalyses the reaction dibenzothiophene + FMNH2 + O2 = dibenzothiophene 5-oxide + FMN + H2O + H(+). The enzyme catalyses dibenzothiophene 5-oxide + FMNH2 + O2 = dibenzothiophene 5,5-dioxide + FMN + H2O + H(+). It participates in sulfur metabolism; dibenzothiophene degradation. Its activity is regulated as follows. Inhibited at high concentrations of FMN or FAD. Functionally, catalyzes the first step of the '4S' desulfurization pathway that removes covalently bound sulfur from dibenzothiophene (DBT) without breaking carbon-carbon bonds. Sulfur dioxygenase which converts DBT to DBT-sulfone (DBTO2 or DBT 5,5-dioxide) probably in a stepwise manner. In addition to FMNH2 can also use FAD (although FAD is less efficient). This chain is Dibenzothiophene monooxygenase, found in Mycolicibacterium goodii (Mycobacterium goodii).